Reading from the N-terminus, the 640-residue chain is 1-deoxy-D-xylulose-5-phosphate synthase (640 aa).

Thiamine diphosphate is bound by residues His75 and Gly117–Ala119. Asp146 serves as a coordination point for Mg(2+). Thiamine diphosphate is bound by residues Ala147–Ala148, Asn175, and Glu370. Residue Asn175 participates in Mg(2+) binding.

This sequence belongs to the transketolase family. DXPS subfamily. In terms of assembly, homodimer. The cofactor is Mg(2+). Thiamine diphosphate serves as cofactor.

The catalysed reaction is D-glyceraldehyde 3-phosphate + pyruvate + H(+) = 1-deoxy-D-xylulose 5-phosphate + CO2. The protein operates within metabolic intermediate biosynthesis; 1-deoxy-D-xylulose 5-phosphate biosynthesis; 1-deoxy-D-xylulose 5-phosphate from D-glyceraldehyde 3-phosphate and pyruvate: step 1/1. In terms of biological role, catalyzes the acyloin condensation reaction between C atoms 2 and 3 of pyruvate and glyceraldehyde 3-phosphate to yield 1-deoxy-D-xylulose-5-phosphate (DXP). The sequence is that of 1-deoxy-D-xylulose-5-phosphate synthase from Chlamydia trachomatis serovar L2 (strain ATCC VR-902B / DSM 19102 / 434/Bu).